The sequence spans 918 residues: Serine/threonine-protein kinase D1 (918 aa).

At Tyr93 the chain carries Phosphotyrosine. The Phorbol-ester/DAG-type 1 zinc finger occupies 144-194 (PHALFVHSYRAPAFCDHCGEMLWGLVRQGLKCEGCGLNYHKRCAFKIPNNC). Phosphoserine occurs at positions 203, 206, 217, and 221. Residues 276–326 (PHTFVIHSYTRPTVCQFCKKLLKGLFRQGLQCKDCRFNCHKRCAPKVPNNC) form a Phorbol-ester/DAG-type 2 zinc finger. Disordered stretches follow at residues 338 to 362 (SPGAESDVVMEEGSDDNDSERNSGL) and 380 to 408 (EGQSDGAEMQDPDADQEDSNRTISPSTSN). Acidic residues-rich tracts occupy residues 345 to 355 (VVMEEGSDDND) and 387 to 396 (EMQDPDADQE). Position 351 is a phosphoserine (Ser351). 2 positions are modified to phosphoserine; by MAPK13: Ser403 and Ser407. The region spanning 428-547 (TVMKEGWMVH…WEVAIQHALM (120 aa)) is the PH domain. A Phosphotyrosine modification is found at Tyr438. The residue at position 454 (Ser454) is a Phosphoserine. Tyr469 carries the post-translational modification Phosphotyrosine; by ABL. A Phosphotyrosine modification is found at Tyr508. Ser554 carries the phosphoserine modification. A Protein kinase domain is found at 589-845 (IFPDEVLGSG…VDKTLSHPWL (257 aa)). Residues 595-603 (LGSGQFGIV) and Lys618 contribute to the ATP site. Residue Asp712 is the Proton acceptor of the active site. Phosphoserine; by PKC/PRKCD is present on Ser744. Ser748 is modified (phosphoserine; by autocatalysis and PKC/PRKCD). Tyr755 carries the post-translational modification Phosphotyrosine. The residue at position 916 (Ser916) is a Phosphoserine; by autocatalysis.

It belongs to the protein kinase superfamily. CAMK Ser/Thr protein kinase family. PKD subfamily. As to quaternary structure, interacts (via N-terminus) with ADAP1/CENTA1. Interacts with MAPK13. Interacts with DAPK1 in an oxidative stress-regulated manner. Interacts with USP28; the interaction induces phosphorylation of USP28 and activated KRAS-mediated stabilization of ZNF304. Interacts with AKAP13 (via C-terminal domain). Requires Mg(2+) as cofactor. Phosphorylated at Ser-403 and Ser-407 by MAPK13 during regulation of insulin secretion in pancreatic beta cells. Phosphorylated by DAPK1. Phosphorylated at Tyr-93 and by ABL at Tyr-469, which primes the kinase in response to oxidative stress, and promotes a second step activating phosphorylation at Ser-744/Ser-748 by PKRD. Phosphorylated on Ser-916 upon S.enterica infection in macrophages.

Its subcellular location is the cytoplasm. It localises to the cell membrane. It is found in the golgi apparatus. The protein localises to the trans-Golgi network. It carries out the reaction L-seryl-[protein] + ATP = O-phospho-L-seryl-[protein] + ADP + H(+). The catalysed reaction is L-threonyl-[protein] + ATP = O-phospho-L-threonyl-[protein] + ADP + H(+). Activated by DAG and phorbol esters. Phorbol-ester/DAG-type domain 1 binds DAG with high affinity and appears to play the dominant role in mediating translocation to the cell membrane and trans-Golgi network. Phorbol-ester/DAG-type domain 2 binds phorbol ester with higher affinity. Autophosphorylation of Ser-748 and phosphorylation of Ser-744 by PKC relieves auto-inhibition by the PH domain. Phosphorylation on Tyr-469 by the SRC-ABL1 pathway in response to oxidative stress, is also required for activation. Activated by DAPK1 under oxidative stress. Its function is as follows. Serine/threonine-protein kinase that converts transient diacylglycerol (DAG) signals into prolonged physiological effects downstream of PKC, and is involved in the regulation of MAPK8/JNK1 and Ras signaling, Golgi membrane integrity and trafficking, cell survival through NF-kappa-B activation, cell migration, cell differentiation by mediating HDAC7 nuclear export, cell proliferation via MAPK1/3 (ERK1/2) signaling, and plays a role in cardiac hypertrophy, VEGFA-induced angiogenesis, genotoxic-induced apoptosis and flagellin-stimulated inflammatory response. Phosphorylates the epidermal growth factor receptor (EGFR) on dual threonine residues, which leads to the suppression of epidermal growth factor (EGF)-induced MAPK8/JNK1 activation and subsequent JUN phosphorylation. Phosphorylates RIN1, inducing RIN1 binding to 14-3-3 proteins YWHAB, YWHAE and YWHAZ and increased competition with RAF1 for binding to GTP-bound form of Ras proteins (NRAS, HRAS and KRAS). Acts downstream of the heterotrimeric G-protein beta/gamma-subunit complex to maintain the structural integrity of the Golgi membranes, and is required for protein transport along the secretory pathway. In the trans-Golgi network (TGN), regulates the fission of transport vesicles that are on their way to the plasma membrane. May act by activating the lipid kinase phosphatidylinositol 4-kinase beta (PI4KB) at the TGN for the local synthesis of phosphorylated inositol lipids, which induces a sequential production of DAG, phosphatidic acid (PA) and lyso-PA (LPA) that are necessary for membrane fission and generation of specific transport carriers to the cell surface. Under oxidative stress, is phosphorylated at Tyr-469 via SRC-ABL1 and contributes to cell survival by activating IKK complex and subsequent nuclear translocation and activation of NFKB1. Involved in cell migration by regulating integrin alpha-5/beta-3 recycling and promoting its recruitment in newly forming focal adhesion. In osteoblast differentiation, mediates the bone morphogenetic protein 2 (BMP2)-induced nuclear export of HDAC7, which results in the inhibition of HDAC7 transcriptional repression of RUNX2. In neurons, plays an important role in neuronal polarity by regulating the biogenesis of TGN-derived dendritic vesicles, and is involved in the maintenance of dendritic arborization and Golgi structure in hippocampal cells. May potentiate mitogenesis induced by the neuropeptide bombesin or vasopressin by mediating an increase in the duration of MAPK1/3 (ERK1/2) signaling, which leads to accumulation of immediate-early gene products including FOS that stimulate cell cycle progression. Plays an important role in the proliferative response induced by low calcium in keratinocytes, through sustained activation of MAPK1/3 (ERK1/2) pathway. Downstream of novel PKC signaling, plays a role in cardiac hypertrophy by phosphorylating HDAC5, which in turn triggers XPO1/CRM1-dependent nuclear export of HDAC5, MEF2A transcriptional activation and induction of downstream target genes that promote myocyte hypertrophy and pathological cardiac remodeling. Mediates cardiac troponin I (TNNI3) phosphorylation at the PKA sites, which results in reduced myofilament calcium sensitivity, and accelerated crossbridge cycling kinetics. The PRKD1-HDAC5 pathway is also involved in angiogenesis by mediating VEGFA-induced specific subset of gene expression, cell migration, and tube formation. In response to VEGFA, is necessary and required for HDAC7 phosphorylation which induces HDAC7 nuclear export and endothelial cell proliferation and migration. During apoptosis induced by cytarabine and other genotoxic agents, PRKD1 is cleaved by caspase-3 at Asp-378, resulting in activation of its kinase function and increased sensitivity of cells to the cytotoxic effects of genotoxic agents. In epithelial cells, is required for transducing flagellin-stimulated inflammatory responses by binding and phosphorylating TLR5, which contributes to MAPK14/p38 activation and production of inflammatory cytokines. Acts as an activator of NLRP3 inflammasome assembly by mediating phosphorylation of NLRP3. May play a role in inflammatory response by mediating activation of NF-kappa-B. May be involved in pain transmission by directly modulating TRPV1 receptor. Plays a role in activated KRAS-mediated stabilization of ZNF304 in colorectal cancer (CRC) cells. Regulates nuclear translocation of transcription factor TFEB in macrophages upon live S.enterica infection. This Rattus norvegicus (Rat) protein is Serine/threonine-protein kinase D1 (Prkd1).